Here is a 256-residue protein sequence, read N- to C-terminus: MNNSKVIKLQDRVPKLKNQKKKNKKNVNHRLILYISILFLLVLFLIYFRSPLSNIKKISVFGNHYMTDEQVMKDSGVTYDTSYFRVTAHKAEENLTKRKEIKAVNVKKRFPNNIDIHIEEYLTIGYINKEGKLQPLLENGKTLDVLPNGKLPVAAPIFEPFKEEKMKELIAELEKLTPAILKSISEIRYSPTNANEDHLTLYMNEGYEVSTTIQNFAKRMEAYPLILKTIEPGKKVLIDLEVGAYTKELGAEEKKE.

Over 1–30 the chain is Cytoplasmic; that stretch reads MNNSKVIKLQDRVPKLKNQKKKNKKNVNHR. Residues 31-51 traverse the membrane as a helical segment; sequence LILYISILFLLVLFLIYFRSP. Residues 52–256 lie on the Extracellular side of the membrane; it reads LSNIKKISVF…KELGAEEKKE (205 aa). The 69-residue stretch at 53-121 folds into the POTRA domain; it reads SNIKKISVFG…NNIDIHIEEY (69 aa).

It belongs to the FtsQ/DivIB family. DivIB subfamily.

The protein resides in the cell membrane. Cell division protein that may be involved in stabilizing or promoting the assembly of the division complex. The polypeptide is Cell division protein DivIB (Bacillus cereus (strain ATCC 14579 / DSM 31 / CCUG 7414 / JCM 2152 / NBRC 15305 / NCIMB 9373 / NCTC 2599 / NRRL B-3711)).